A 285-amino-acid chain; its full sequence is Golgi to ER traffic protein 2 (285 aa).

Basic and acidic residues predominate over residues 1–10 (MSELTEAEKR). Disordered regions lie at residues 1–72 (MSEL…KEDS) and 87–106 (MQGQ…PDLL). Position 2 is an N-acetylserine (serine 2). Residues 2–148 (SELTEAEKRR…LDYHDYLLNR (147 aa)) are Cytoplasmic-facing. The span at 11-20 (RLLRERRQKK) shows a compositional bias: basic residues. The segment covering 24–42 (GGASSRLNKITGQASSHLN) has biased composition (polar residues). Serine 45 carries the phosphoserine modification. Over residues 49–60 (APSAAKTTPPAS) the composition is skewed to low complexity. A compositionally biased stretch (polar residues) spans 93–104 (GKSTPQDSSTPD). The helical transmembrane segment at 149 to 169 (LKAWTILVKWVFFLLPYLYLI) threads the bilayer. Residues 170–196 (TRPNSSVWPAYAFTQSAWFAPLRNPSN) are Lumenal-facing. N-linked (GlcNAc...) asparagine glycosylation is found at asparagine 173 and asparagine 196. A helical membrane pass occupies residues 197–216 (FTRIFATFEFLSISIYYQLL). Topologically, residues 217 to 263 (KNVEHKSKIKNLQDTNKLVKLVSLVPEGVIPVANLKGKLITLLQYWD) are cytoplasmic. The helical transmembrane segment at 264–284 (LLSMLITDISFVLIVLGLLTY) threads the bilayer. Residue leucine 285 is a topological domain, lumenal.

This sequence belongs to the GET2 family. As to quaternary structure, component of the Golgi to ER traffic (GET) complex, which is composed of GET1, GET2 and GET3. Within the complex, GET1 and GET2 form a heterotetramer which is stabilized by phosphatidylinositol binding and which binds to the GET3 homodimer.

It localises to the endoplasmic reticulum membrane. Its subcellular location is the golgi apparatus membrane. Functionally, required for the post-translational delivery of tail-anchored (TA) proteins to the endoplasmic reticulum. Together with GET1, acts as a membrane receptor for soluble GET3, which recognizes and selectively binds the transmembrane domain of TA proteins in the cytosol. The GET complex cooperates with the HDEL receptor ERD2 to mediate the ATP-dependent retrieval of resident ER proteins that contain a C-terminal H-D-E-L retention signal from the Golgi to the ER. Involved in DNA replication and DNA damage response and also in cell wall function. The polypeptide is Golgi to ER traffic protein 2 (Saccharomyces cerevisiae (strain RM11-1a) (Baker's yeast)).